A 296-amino-acid polypeptide reads, in one-letter code: Bifunctional protein FolD (296 aa).

NADP(+)-binding positions include 166–168 (GRS), Ser191, and Ile232.

Belongs to the tetrahydrofolate dehydrogenase/cyclohydrolase family. In terms of assembly, homodimer.

The enzyme catalyses (6R)-5,10-methylene-5,6,7,8-tetrahydrofolate + NADP(+) = (6R)-5,10-methenyltetrahydrofolate + NADPH. It catalyses the reaction (6R)-5,10-methenyltetrahydrofolate + H2O = (6R)-10-formyltetrahydrofolate + H(+). It functions in the pathway one-carbon metabolism; tetrahydrofolate interconversion. Catalyzes the oxidation of 5,10-methylenetetrahydrofolate to 5,10-methenyltetrahydrofolate and then the hydrolysis of 5,10-methenyltetrahydrofolate to 10-formyltetrahydrofolate. The polypeptide is Bifunctional protein FolD (Cereibacter sphaeroides (strain ATCC 17025 / ATH 2.4.3) (Rhodobacter sphaeroides)).